Here is a 434-residue protein sequence, read N- to C-terminus: MARTDIARRVYNHAWKLDPIIRSLIDTDFYKLLMLQMIWKLYPDVNASFTLINRTKRVRLADEIDEGELREQLDHARTLKLSKKEMIWLAGNSFYGRAQIFEPEFLAWLSNFQLPEYELSKKDGQYVLDFHGSWKETTMWEIPALAIVNELRSRSAMRALGPFTLDVLYARAKAKMWSKVERLKELPGLRISDFGTRRRHSFLWQRWCVEALKEGIGPAFTGTSNVLLAMDSDLEAVGTNAHELPMVAAALAQTDEQLRNAPYKILRDWNKLYGGNLLIVLPDAFGTAAFLRDAPEWVADWTGFRPDSAPPIEGGEKIIDWWKKMGRDPRQKLLIFSDGLDVDAIIDTYRHFEGRVRMSFGWGTNLTNDFSGCAPTEISGLNPISVVCKVSDADGRPAVKLSDNPQKATGDPAEVERYLKFFGAEDRIDQTVLV.

His242 carries the phosphohistidine; by autocatalysis modification.

The protein belongs to the NAPRTase family. In terms of processing, transiently phosphorylated on a His residue during the reaction cycle. Phosphorylation strongly increases the affinity for substrates and increases the rate of nicotinate D-ribonucleotide production. Dephosphorylation regenerates the low-affinity form of the enzyme, leading to product release.

It carries out the reaction nicotinate + 5-phospho-alpha-D-ribose 1-diphosphate + ATP + H2O = nicotinate beta-D-ribonucleotide + ADP + phosphate + diphosphate. The protein operates within cofactor biosynthesis; NAD(+) biosynthesis; nicotinate D-ribonucleotide from nicotinate: step 1/1. In terms of biological role, catalyzes the synthesis of beta-nicotinate D-ribonucleotide from nicotinate and 5-phospho-D-ribose 1-phosphate at the expense of ATP. The chain is Nicotinate phosphoribosyltransferase from Rhizobium leguminosarum bv. trifolii (strain WSM2304).